The sequence spans 243 residues: uncharacterized protein (243 aa).

Its subcellular location is the nucleus. The protein resides in the nucleolus. This is an uncharacterized protein from Schizosaccharomyces pombe (strain 972 / ATCC 24843) (Fission yeast).